Consider the following 398-residue polypeptide: Secreted aspartic protease 2 (398 aa).

An N-terminal signal peptide occupies residues 1 to 18; it reads MFLKNIFIALAIALLVDA. Residues 19-56 constitute a propeptide, activation peptide; that stretch reads TPTTTKRSAGFVALDFSVVKTPKAFPVTNGQEGKTSKR. Residues 70-384 enclose the Peptidase A1 domain; sequence YAADITVGSN…DLDDNEISLA (315 aa). Residue Asp-88 is part of the active site. 88-90 contributes to the pepstatin A binding site; sequence DTG. Cys-103 and Cys-115 are disulfide-bonded. Residue 141-142 participates in pepstatin A binding; sequence GD. Zn(2+) is bound by residues Asp-247 and Asp-270. Residue Asp-274 is part of the active site. 274–278 is a binding site for pepstatin A; sequence DSGTT. Cys-312 and Cys-350 form a disulfide bridge. 2 N-linked (GlcNAc...) asparagine glycosylation sites follow: Asn-313 and Asn-321.

It belongs to the peptidase A1 family. As to quaternary structure, monomer.

It localises to the secreted. It carries out the reaction Preferential cleavage at the carboxyl of hydrophobic amino acids, but fails to cleave 15-Leu-|-Tyr-16, 16-Tyr-|-Leu-17 and 24-Phe-|-Phe-25 of insulin B chain. Activates trypsinogen, and degrades keratin.. Secreted aspartic peptidases (SAPs) are a group of ten acidic hydrolases considered as key virulence factors. These enzymes supply the fungus with nutrient amino acids as well as are able to degrade the selected host's proteins involved in the immune defense. Induces host inflammatory cytokine production in a proteolytic activity-independent way. Plays a role in tissue damage during superficial infection. Moreover, acts toward human hemoglobin though limited proteolysis to generate a variety of antimicrobial hemocidins, enabling to compete with the other microorganisms of the same physiological niche using the microbicidal peptides generated from the host protein. Its function is as follows. Plays a key role in defense against host by cleaving histatin-5 (Hst 5), a peptide from human saliva that carries out fungicidal activity. The cleavage rate decreases in an order of SAP2 &gt; SAP9 &gt; SAP3 &gt; SAP7 &gt; SAP4 &gt; SAP1 &gt; SAP8. The first cleavage occurs between residues 'Lys-17' and 'His-18' of Hst 5, giving DSHAKRHHGYKRKFHEK and HHSHRGY peptides. Simultaneously, the DSHAKRHHGYKRK peptide is also formed. Further fragmentation by SAP2 results in FHEK and DSHAKRHHGY products. The chain is Secreted aspartic protease 2 from Candida albicans (Yeast).